The sequence spans 79 residues: Suppressor of tumorigenicity 20 protein (79 aa).

As to expression, expressed in leukocytes, lung, spleen, liver, heart, kidney, muscle and uterine cervix. Down-regulated in cervical cancer.

In terms of biological role, may act as a tumor suppressor. Promotes apoptosis of cancer cells. This is Suppressor of tumorigenicity 20 protein (ST20) from Homo sapiens (Human).